An 86-amino-acid polypeptide reads, in one-letter code: Large ribosomal subunit protein bL28 (86 aa).

Belongs to the bacterial ribosomal protein bL28 family.

This chain is Large ribosomal subunit protein bL28, found in Phocaeicola vulgatus (strain ATCC 8482 / DSM 1447 / JCM 5826 / CCUG 4940 / NBRC 14291 / NCTC 11154) (Bacteroides vulgatus).